A 381-amino-acid chain; its full sequence is Protein COS1 (381 aa).

Topologically, residues 1-42 are cytoplasmic; it reads MKENELKNEKSVDVLSFKQLESQKIVLPQDLFRSSFTWFCYE. Residues 43–63 form a helical membrane-spanning segment; that stretch reads IYKSLAFRIWMLLWLPLSVWW. Topologically, residues 64–72 are extracellular; that stretch reads KLSNNCIYP. The helical transmembrane segment at 73-93 threads the bilayer; the sequence is LIVSLLVLFLGPIFVLVICGL. The Cytoplasmic portion of the chain corresponds to 94–231; that stretch reads SRKRSLSKQL…YRFKLTWFLK (138 aa). The chain crosses the membrane as a helical span at residues 232–252; the sequence is RISNIFMLIPFLNFLCCIYVS. Topologically, residues 253–254 are extracellular; the sequence is RG. Residues 255–275 form a helical membrane-spanning segment; sequence MCLLLRTFYLGWILFMLVQGF. Topologically, residues 276–381 are cytoplasmic; that stretch reads QNMRMIVLSV…QLSCSEESLA (106 aa).

The protein belongs to the DUP/COS family.

The protein resides in the membrane. The chain is Protein COS1 (COS1) from Saccharomyces cerevisiae (strain ATCC 204508 / S288c) (Baker's yeast).